The chain runs to 274 residues: (R)-stereoselective amidase (274 aa).

Residues 1–234 (MKIELVQLAG…EVRHVVELDL (234 aa)) form the CN hydrolase domain. Catalysis depends on Glu40, which acts as the Proton acceptor. The Proton donor role is filled by Lys108. Cys140 (nucleophile) is an active-site residue.

In terms of assembly, monomer.

The catalysed reaction is (R)-piperazine-2-carboxamide + H2O = (R)-piperazine-2-carboxylate + NH4(+). It catalyses the reaction beta-alaninamide + H2O = beta-alanine + NH4(+). Completely inhibited by p-chloromercuribenzoate, N-ethylmaleimide, MnSO(4), MnCl(2), CoCl(2), NiCl(2), CuSO(4), CuCl(2), ZnSO(4), ZnCl(2), AgNO(3), CdCl(2), HgCl(2) and PbCl(2). Partially inhibited by FeCl(3) and Fe(NH(4))(2)(SO(4))(2). Slightly enhanced by dithiothreitol. Unaffected by LiBr, H(2)BO(3), NaCl, MgSO(4), MgCl(2), AlCl(3), KCl, CaCl(2), CrCl(3), RbCl, Na(2)MoO(4), (NH(4))(6)Mo(7)O(24), CsCl and BaCl(2). Unaffected by the chelating agents o-phenanthroline, 8-hydroxyquinoline, enthylenediaminetetraacetic acid and alpha,alpha'-dipyridyl. Not inhibited by the carbonyl reagents hydroxylamine, phenylhydrazine, hydrazine, D,L-penicillamine and D-cycloserine. Not affected by the serine protease inhibitor phenylmethanesulfonyl fluoride, the serine/cysteine protease inhibitor leupeptine or the aspartic protease inhibitor pepstatin. Hydrolyzes (R)-piperazine-2-carboxamide and (R)-piperazine-2-tert-butylcarboxamide with strict R-stereoselectivity. Also active towards beta-alaninamide, piperidine-3-carboxmide, D-glutaminamide and slightly active towards L-glutaminamide and piperidine-4-carboxamide. The protein is (R)-stereoselective amidase of Pseudomonas sp.